A 283-amino-acid polypeptide reads, in one-letter code: Thymidylate synthase (283 aa).

Arg-22 contacts dUMP. The active-site Nucleophile is the Cys-160. DUMP-binding positions include 180 to 183 (RSCD), Asn-191, and 221 to 223 (HIY). Position 183 (Asp-183) interacts with (6R)-5,10-methylene-5,6,7,8-tetrahydrofolate. Ser-282 lines the (6R)-5,10-methylene-5,6,7,8-tetrahydrofolate pocket.

This sequence belongs to the thymidylate synthase family. Bacterial-type ThyA subfamily. In terms of assembly, homodimer.

It is found in the cytoplasm. It carries out the reaction dUMP + (6R)-5,10-methylene-5,6,7,8-tetrahydrofolate = 7,8-dihydrofolate + dTMP. The protein operates within pyrimidine metabolism; dTTP biosynthesis. Functionally, catalyzes the reductive methylation of 2'-deoxyuridine-5'-monophosphate (dUMP) to 2'-deoxythymidine-5'-monophosphate (dTMP) while utilizing 5,10-methylenetetrahydrofolate (mTHF) as the methyl donor and reductant in the reaction, yielding dihydrofolate (DHF) as a by-product. This enzymatic reaction provides an intracellular de novo source of dTMP, an essential precursor for DNA biosynthesis. This is Thymidylate synthase from Mannheimia succiniciproducens (strain KCTC 0769BP / MBEL55E).